The sequence spans 380 residues: Lipid-A-disaccharide synthase (380 aa).

The protein belongs to the LpxB family.

The catalysed reaction is a lipid X + a UDP-2-N,3-O-bis[(3R)-3-hydroxyacyl]-alpha-D-glucosamine = a lipid A disaccharide + UDP + H(+). It participates in bacterial outer membrane biogenesis; LPS lipid A biosynthesis. In terms of biological role, condensation of UDP-2,3-diacylglucosamine and 2,3-diacylglucosamine-1-phosphate to form lipid A disaccharide, a precursor of lipid A, a phosphorylated glycolipid that anchors the lipopolysaccharide to the outer membrane of the cell. This is Lipid-A-disaccharide synthase from Francisella tularensis subsp. novicida (strain U112).